Consider the following 257-residue polypeptide: Snake venom serine protease salmonase (257 aa).

An N-terminal signal peptide occupies residues 1–18 (MVLIRVLVNFLILQLSYA). A propeptide spanning residues 19 to 24 (QKSSEL) is cleaved from the precursor. The 224-residue stretch at 25–248 (VIGGDECNIN…YIDWIQSIIA (224 aa)) folds into the Peptidase S1 domain. 5 cysteine pairs are disulfide-bonded: Cys31/Cys162, Cys49/Cys65, Cys141/Cys209, Cys173/Cys188, and Cys199/Cys224. The active-site Charge relay system is His64. N-linked (GlcNAc...) asparagine glycosylation occurs at Asn78. Catalysis depends on Asp109, which acts as the Charge relay system. Ser203 (charge relay system) is an active-site residue.

It belongs to the peptidase S1 family. Snake venom subfamily. Monomer. In terms of tissue distribution, expressed by the venom gland.

Its subcellular location is the secreted. In terms of biological role, snake venom serine protease that may act in the hemostasis system of the prey. The sequence is that of Snake venom serine protease salmonase from Gloydius brevicauda (Korean slamosa snake).